The chain runs to 734 residues: Photosystem I P700 chlorophyll a apoprotein A2 (734 aa).

8 helical membrane-spanning segments follow: residues 46–69, 135–158, 175–199, 273–291, 330–353, 369–395, 417–439, and 517–535; these read IFAS…FHVA, LYTG…LHLQ, LNHH…HVAI, VAHH…GLMY, IHFQ…QHMY, AALY…IFFI, AIIS…LYVH, and FLVH…LILV. C559 and C568 together coordinate [4Fe-4S] cluster. 2 consecutive transmembrane segments (helical) span residues 575 to 596 and 643 to 665; these read DFYL…YWHW and LSVW…MFLI. Chlorophyll a contacts are provided by H654, M662, and Y670. W671 lines the phylloquinone pocket. Residues 707-727 form a helical membrane-spanning segment; the sequence is LVGLVHFSVGYIFTYAAFLIA.

Belongs to the PsaA/PsaB family. In terms of assembly, the PsaA/B heterodimer binds the P700 chlorophyll special pair and subsequent electron acceptors. PSI consists of a core antenna complex that captures photons, and an electron transfer chain that converts photonic excitation into a charge separation. The eukaryotic PSI reaction center is composed of at least 11 subunits. P700 is a chlorophyll a/chlorophyll a' dimer, A0 is one or more chlorophyll a, A1 is one or both phylloquinones and FX is a shared 4Fe-4S iron-sulfur center. is required as a cofactor.

The protein localises to the plastid. It is found in the chloroplast thylakoid membrane. It catalyses the reaction reduced [plastocyanin] + hnu + oxidized [2Fe-2S]-[ferredoxin] = oxidized [plastocyanin] + reduced [2Fe-2S]-[ferredoxin]. In terms of biological role, psaA and PsaB bind P700, the primary electron donor of photosystem I (PSI), as well as the electron acceptors A0, A1 and FX. PSI is a plastocyanin-ferredoxin oxidoreductase, converting photonic excitation into a charge separation, which transfers an electron from the donor P700 chlorophyll pair to the spectroscopically characterized acceptors A0, A1, FX, FA and FB in turn. Oxidized P700 is reduced on the lumenal side of the thylakoid membrane by plastocyanin. The sequence is that of Photosystem I P700 chlorophyll a apoprotein A2 from Pisum sativum (Garden pea).